The sequence spans 472 residues: Zinc finger CCCH domain-containing protein 59 (472 aa).

Positions 87–139 (YKSPEGNRPRQNAANGSAKPQVIGTGHRVSNQPRKNAVYGPRSSSLSDTRGCG) are disordered. The C3H1-type zinc-finger motif lies at 145-172 (SPKKSVCNFWKDGNCKKGEKCQFLHSWS). 5 WD repeats span residues 185-226 (GHKN…RSIN), 261-301 (HLEG…SDPF), 310-347 (HHSGEVTCFVVGGEVLYSGSVDKTIKVWDLNTLQCRMT), 350-387 (QHIGTVTSLLCWDKCLISSSLDGTIKLWACSENESLKV), and 436-472 (FSTQTICTLTIGPGGLLFSGDKSGNLRVWSLASGTKV).

This chain is Zinc finger CCCH domain-containing protein 59 (ZFWD3), found in Arabidopsis thaliana (Mouse-ear cress).